We begin with the raw amino-acid sequence, 255 residues long: Homeobox protein DLX-1 (255 aa).

Polar residues predominate over residues 1 to 14 (MTMTTMPESLNSPV). 2 disordered regions span residues 1-38 (MTMTTMPESLNSPVSGKAVFMEFGPPNQQMSPSPMSHG) and 95-118 (SLAQSRLEDPGADSEKSTVVEGGE). Residues 25–36 (PPNQQMSPSPMS) show a composition bias toward low complexity. The segment covering 100–112 (RLEDPGADSEKST) has biased composition (basic and acidic residues). Positions 128-187 (IRKPRTIYSSLQLQALNRRFQQTQYLALPERAELAASLGLTQTQVKIWFQNKRSKFKKLM) form a DNA-binding region, homeobox. The tract at residues 204-230 (ALSAGSPPVPPGWNPNSSSGKGSGGNA) is disordered.

This sequence belongs to the distal-less homeobox family. Interacts with SMAD4 (via homeobox DNA-binding domain). Interacts (via homeobox DNA-binding domain) with POU4F2; this interaction suppresses DLX1-mediated transcriptional activity in postnatal retina and enhances retinal ganglion cell (RGC) differentiation. As to expression, expressed in hematopoietic cell lines.

The protein localises to the nucleus. Functionally, plays a role as a transcriptional activator or repressor. Inhibits several cytokine signaling pathways, such as TGFB1, activin-A/INHBA and BMP4 by interfering with the transcriptional stimulatory activity of transcription factors, such as MSX2, FAST2, SMAD2 and SMAD3 during hematopoietic cell differentiation. Plays a role in terminal differentiation of interneurons, such as amacrine and bipolar cells in the developing retina. Likely to play a regulatory role in the development of the ventral forebrain. May play a role in craniofacial patterning and morphogenesis and may be involved in the early development of diencephalic subdivisions. This Homo sapiens (Human) protein is Homeobox protein DLX-1 (DLX1).